The chain runs to 505 residues: Glycerol kinase 2 (505 aa).

T17 serves as a coordination point for ADP. 3 residues coordinate ATP: T17, T18, and S19. A sn-glycerol 3-phosphate-binding site is contributed by T17. R21 provides a ligand contact to ADP. Sn-glycerol 3-phosphate-binding residues include R87, E88, Y139, and D249. Residues R87, E88, Y139, D249, and Q250 each coordinate glycerol. Residues T271 and G314 each coordinate ADP. T271, G314, Q318, and G415 together coordinate ATP. Residues G415 and N419 each coordinate ADP.

Belongs to the FGGY kinase family.

It catalyses the reaction glycerol + ATP = sn-glycerol 3-phosphate + ADP + H(+). It participates in polyol metabolism; glycerol degradation via glycerol kinase pathway; sn-glycerol 3-phosphate from glycerol: step 1/1. Its activity is regulated as follows. Inhibited by fructose 1,6-bisphosphate (FBP). Functionally, key enzyme in the regulation of glycerol uptake and metabolism. Catalyzes the phosphorylation of glycerol to yield sn-glycerol 3-phosphate. The sequence is that of Glycerol kinase 2 from Pseudomonas aeruginosa (strain ATCC 15692 / DSM 22644 / CIP 104116 / JCM 14847 / LMG 12228 / 1C / PRS 101 / PAO1).